We begin with the raw amino-acid sequence, 192 residues long: Adenine phosphoribosyltransferase (192 aa).

The protein belongs to the purine/pyrimidine phosphoribosyltransferase family. In terms of assembly, homodimer.

The protein localises to the cytoplasm. The enzyme catalyses AMP + diphosphate = 5-phospho-alpha-D-ribose 1-diphosphate + adenine. The protein operates within purine metabolism; AMP biosynthesis via salvage pathway; AMP from adenine: step 1/1. Functionally, catalyzes a salvage reaction resulting in the formation of AMP, that is energically less costly than de novo synthesis. The polypeptide is Adenine phosphoribosyltransferase (Corynebacterium efficiens (strain DSM 44549 / YS-314 / AJ 12310 / JCM 11189 / NBRC 100395)).